Here is a 348-residue protein sequence, read N- to C-terminus: Probable dual-specificity RNA methyltransferase RlmN (348 aa).

The active-site Proton acceptor is Glu93. Positions 99-333 (TEKRLTACLS…VSLRKSRGLD (235 aa)) constitute a Radical SAM core domain. Cys106 and Cys338 are joined by a disulfide. Residues Cys113, Cys117, and Cys120 each contribute to the [4Fe-4S] cluster site. Residues 160–161 (GE), Ser190, 219–221 (SLH), and Asn295 contribute to the S-adenosyl-L-methionine site. The active-site S-methylcysteine intermediate is Cys338.

This sequence belongs to the radical SAM superfamily. RlmN family. [4Fe-4S] cluster serves as cofactor.

It localises to the cytoplasm. The catalysed reaction is adenosine(2503) in 23S rRNA + 2 reduced [2Fe-2S]-[ferredoxin] + 2 S-adenosyl-L-methionine = 2-methyladenosine(2503) in 23S rRNA + 5'-deoxyadenosine + L-methionine + 2 oxidized [2Fe-2S]-[ferredoxin] + S-adenosyl-L-homocysteine. The enzyme catalyses adenosine(37) in tRNA + 2 reduced [2Fe-2S]-[ferredoxin] + 2 S-adenosyl-L-methionine = 2-methyladenosine(37) in tRNA + 5'-deoxyadenosine + L-methionine + 2 oxidized [2Fe-2S]-[ferredoxin] + S-adenosyl-L-homocysteine. Functionally, specifically methylates position 2 of adenine 2503 in 23S rRNA and position 2 of adenine 37 in tRNAs. The protein is Probable dual-specificity RNA methyltransferase RlmN of Prochlorococcus marinus (strain AS9601).